Consider the following 503-residue polypeptide: Probable cytosol aminopeptidase (503 aa).

Residues Lys274 and Asp279 each contribute to the Mn(2+) site. Residue Lys286 is part of the active site. Positions 297, 356, and 358 each coordinate Mn(2+). The active site involves Arg360.

It belongs to the peptidase M17 family. Requires Mn(2+) as cofactor.

It is found in the cytoplasm. It catalyses the reaction Release of an N-terminal amino acid, Xaa-|-Yaa-, in which Xaa is preferably Leu, but may be other amino acids including Pro although not Arg or Lys, and Yaa may be Pro. Amino acid amides and methyl esters are also readily hydrolyzed, but rates on arylamides are exceedingly low.. The catalysed reaction is Release of an N-terminal amino acid, preferentially leucine, but not glutamic or aspartic acids.. Its function is as follows. Presumably involved in the processing and regular turnover of intracellular proteins. Catalyzes the removal of unsubstituted N-terminal amino acids from various peptides. The protein is Probable cytosol aminopeptidase of Burkholderia orbicola (strain MC0-3).